Reading from the N-terminus, the 198-residue chain is Phosphoheptose isomerase (198 aa).

The SIS domain occupies 34–196; sequence IVEALIRGNK…DDSLFPADHG (163 aa). 49-51 serves as a coordination point for substrate; it reads NGG. His-58 and Asn-62 together coordinate Zn(2+). Residues Asn-62, 91–92, 117–119, Ser-122, and Gln-172 each bind substrate; these read ND and STS. Zn(2+)-binding residues include Gln-172 and His-180.

This sequence belongs to the SIS family. GmhA subfamily. As to quaternary structure, homotetramer. The cofactor is Zn(2+).

Its subcellular location is the cytoplasm. It catalyses the reaction 2 D-sedoheptulose 7-phosphate = D-glycero-alpha-D-manno-heptose 7-phosphate + D-glycero-beta-D-manno-heptose 7-phosphate. It functions in the pathway carbohydrate biosynthesis; D-glycero-D-manno-heptose 7-phosphate biosynthesis; D-glycero-alpha-D-manno-heptose 7-phosphate and D-glycero-beta-D-manno-heptose 7-phosphate from sedoheptulose 7-phosphate: step 1/1. Catalyzes the isomerization of sedoheptulose 7-phosphate in D-glycero-D-manno-heptose 7-phosphate. The polypeptide is Phosphoheptose isomerase (Alteromonas mediterranea (strain DSM 17117 / CIP 110805 / LMG 28347 / Deep ecotype)).